The following is a 42-amino-acid chain: Serine/threonine-protein phosphatase 5 (42 aa).

The tract at residues 38–42 (QLGVM) is required for autoinhibition.

The protein belongs to the PPP phosphatase family. PP-5 (PP-T) subfamily. As to quaternary structure, probably forms a complex composed of chaperones HSP90 and HSP70, co-chaperones STIP1/HOP, CDC37, PPP5C, PTGES3/p23, TSC1 and client protein TSC2. Probably forms a complex composed of chaperones HSP90 and HSP70, co-chaperones CDC37, PPP5C, TSC1 and client protein TSC2, CDK4, AKT, RAF1 and NR3C1; this complex does not contain co-chaperones STIP1/HOP and PTGES3/p23. Part of a complex with HSP90/HSP90AA1 and steroid receptors. Interacts (via TPR repeats) with HSP90AA1 (via TPR repeat-binding motif) or HSPA1A/HSPA1B; the interaction is direct and activates the phosphatase activity. Dissociates from HSPA1A/HSPA1B and HSP90AA1 in response to arachidonic acid. Interacts with CPNE1 (via VWFA domain). Interacts with CDC16, CDC27. Interacts with KLHDC10 (via the 6 Kelch repeats); inhibits the phosphatase activity on MAP3K5. Interacts with ATM and ATR; both interactions are induced by DNA damage and enhance ATM and ATR kinase activity. Interacts with RAD17; reduced by DNA damage. Interacts with nuclear receptors such as NR3C1/GCR and PPARG (activated by agonist); regulates their transactivation activities. Interacts (via TPR repeats) with S100 proteins S100A1, S100A2, S100A6, S100B and S100P; the interactions are calcium-dependent, strongly activate PPP5C phosphatase activity and compete with HSP90AA1 and MAP3K5 interactions. Interacts with SMAD2 and SMAD3 but not with SMAD1; decreases SMAD3 phosphorylation and protein levels. Interacts (via TPR repeats) with CRY1 and CRY2; the interaction with CRY2 down-regulates the phosphatase activity on CSNK1E. Interacts (via TPR repeats) with the active form of RAC1, GNA12 or GNA13; these interactions activate the phosphatase activity and translocate PPP5C to the cell membrane. Interacts with FLCN. The cofactor is Mg(2+). It depends on Mn(2+) as a cofactor. Activated by at least two different proteolytic cleavages producing a 56 kDa and a 50 kDa form.

Its subcellular location is the nucleus. The protein resides in the cytoplasm. It localises to the cell membrane. It carries out the reaction O-phospho-L-seryl-[protein] + H2O = L-seryl-[protein] + phosphate. It catalyses the reaction O-phospho-L-threonyl-[protein] + H2O = L-threonyl-[protein] + phosphate. Its activity is regulated as follows. Autoinhibited. In the autoinhibited state, the TPR domain interacts with the catalytic region and prevents substrate access to the catalytic pocket. Allosterically activated by various polyunsaturated fatty acids, free long-chain fatty-acids and long-chain fatty acyl-CoA esters, arachidonic acid being the most effective activator. HSP90A and probably RAC1, GNA12 and GNA13 can also release the autoinhibition by the TPR repeat. Activation by RAC1, GNA12 and GNA13 is synergistic with the one produced by fatty acids binding. Inhibited by okadaic acid. Functionally, serine/threonine-protein phosphatase that dephosphorylates a myriad of proteins involved in different signaling pathways including the kinases CSNK1E, ASK1/MAP3K5, PRKDC and RAF1, the nuclear receptors NR3C1, PPARG, ESR1 and ESR2, SMAD proteins and TAU/MAPT. Implicated in wide ranging cellular processes, including apoptosis, differentiation, DNA damage response, cell survival, regulation of ion channels or circadian rhythms, in response to steroid and thyroid hormones, calcium, fatty acids, TGF-beta as well as oxidative and genotoxic stresses. Participates in the control of DNA damage response mechanisms such as checkpoint activation and DNA damage repair through, for instance, the regulation ATM/ATR-signaling and dephosphorylation of PRKDC and TP53BP1. Inhibits ASK1/MAP3K5-mediated apoptosis induced by oxidative stress. Plays a positive role in adipogenesis, mainly through the dephosphorylation and activation of PPARG transactivation function. Also dephosphorylates and inhibits the anti-adipogenic effect of NR3C1. Regulates the circadian rhythms, through the dephosphorylation and activation of CSNK1E. May modulate TGF-beta signaling pathway by the regulation of SMAD3 phosphorylation and protein expression levels. Dephosphorylates and may play a role in the regulation of TAU/MAPT. Through their dephosphorylation, may play a role in the regulation of ions channels such as KCNH2. Dephosphorylate FNIP1, disrupting interaction with HSP90AA1/Hsp90. The polypeptide is Serine/threonine-protein phosphatase 5 (PPP5C) (Oryctolagus cuniculus (Rabbit)).